The primary structure comprises 231 residues: Inner membrane protein YohK (231 aa).

Position 1 (methionine 1) is a topological domain, periplasmic. Residues 2-22 (MANIWWSLPLTLIVFFAARKL) form a helical membrane-spanning segment. Residues 23 to 29 (AARYKFP) lie on the Cytoplasmic side of the membrane. Residues 30-50 (LLNPLLVAMVVIIPFLMLTGI) traverse the membrane as a helical segment. Residues 51 to 90 (SYDSYFKGSEVLNDLLQPAVVALAYPLYEQLHQIRARWKS) are Periplasmic-facing. A helical transmembrane segment spans residues 91–111 (IITICFIGSVVAMVTGTSVAL). The Cytoplasmic segment spans residues 112 to 118 (LMGASPE). Transmembrane regions (helical) follow at residues 119 to 139 (IAAS…VGGS) and 140 to 160 (IGGI…LGAV). Residues 161–208 (FGHTLLNAMRIRTKAARGLAMGTASHALGTARCAELDYQEGAFSSLAL) are Cytoplasmic-facing. The helical transmembrane segment at 209-229 (VLCGIITSLIAPFLFPIILAV) threads the bilayer. Over 230–231 (MG) the chain is Periplasmic.

Belongs to the YohK (E.coli)/YwbG (IPA-22R) (B.subtilis) family.

It localises to the cell inner membrane. In Escherichia coli (strain K12), this protein is Inner membrane protein YohK (yohK).